The primary structure comprises 214 residues: Heat shock 70 kDa protein cognate 1 (214 aa).

The protein belongs to the heat shock protein 70 family.

The sequence is that of Heat shock 70 kDa protein cognate 1 (Hsc70-1) from Drosophila simulans (Fruit fly).